Consider the following 136-residue polypeptide: Small ribosomal subunit protein uS9 (136 aa).

It belongs to the universal ribosomal protein uS9 family.

This is Small ribosomal subunit protein uS9 from Borreliella burgdorferi (strain ZS7) (Borrelia burgdorferi).